The sequence spans 308 residues: Porphobilinogen deaminase (308 aa).

S-(dipyrrolylmethanemethyl)cysteine is present on Cys-241.

It belongs to the HMBS family. In terms of assembly, monomer. Dipyrromethane serves as cofactor.

It catalyses the reaction 4 porphobilinogen + H2O = hydroxymethylbilane + 4 NH4(+). It participates in porphyrin-containing compound metabolism; protoporphyrin-IX biosynthesis; coproporphyrinogen-III from 5-aminolevulinate: step 2/4. In terms of biological role, tetrapolymerization of the monopyrrole PBG into the hydroxymethylbilane pre-uroporphyrinogen in several discrete steps. The protein is Porphobilinogen deaminase of Exiguobacterium sibiricum (strain DSM 17290 / CCUG 55495 / CIP 109462 / JCM 13490 / 255-15).